A 271-amino-acid polypeptide reads, in one-letter code: 1,4-dihydroxy-2-naphthoyl-CoA synthase (271 aa).

Residues 71–75 (SGGDQ), Tyr-83, 115–119 (YAIGG), Thr-141, Ser-147, Tyr-244, and Lys-259 contribute to the substrate site. 140–142 (QTG) is a binding site for hydrogencarbonate. Residues 250 to 263 (KEGRDSFKEKRKPD) show a composition bias toward basic and acidic residues. The tract at residues 250-271 (KEGRDSFKEKRKPDFGQFPRFP) is disordered.

Belongs to the enoyl-CoA hydratase/isomerase family. MenB subfamily. The cofactor is hydrogencarbonate.

The catalysed reaction is 2-succinylbenzoyl-CoA + H(+) = 1,4-dihydroxy-2-naphthoyl-CoA + H2O. It functions in the pathway quinol/quinone metabolism; 1,4-dihydroxy-2-naphthoate biosynthesis; 1,4-dihydroxy-2-naphthoate from chorismate: step 6/7. The protein operates within quinol/quinone metabolism; menaquinone biosynthesis. Converts o-succinylbenzoyl-CoA (OSB-CoA) to 1,4-dihydroxy-2-naphthoyl-CoA (DHNA-CoA). This is 1,4-dihydroxy-2-naphthoyl-CoA synthase from Bacillus subtilis (strain 168).